The sequence spans 600 residues: Aspartate--tRNA(Asp/Asn) ligase (600 aa).

Glu181 contributes to the L-aspartate binding site. The aspartate stretch occupies residues 205–208 (QQYK). Arg227 provides a ligand contact to L-aspartate. ATP is bound by residues 227–229 (RDE) and Gln236. His455 is a binding site for L-aspartate. An ATP-binding site is contributed by Glu490. Arg497 contacts L-aspartate. 542–545 (GLDR) serves as a coordination point for ATP.

This sequence belongs to the class-II aminoacyl-tRNA synthetase family. Type 1 subfamily. Homodimer.

It is found in the cytoplasm. It catalyses the reaction tRNA(Asx) + L-aspartate + ATP = L-aspartyl-tRNA(Asx) + AMP + diphosphate. Aspartyl-tRNA synthetase with relaxed tRNA specificity since it is able to aspartylate not only its cognate tRNA(Asp) but also tRNA(Asn). Reaction proceeds in two steps: L-aspartate is first activated by ATP to form Asp-AMP and then transferred to the acceptor end of tRNA(Asp/Asn). The protein is Aspartate--tRNA(Asp/Asn) ligase of Methylacidiphilum infernorum (isolate V4) (Methylokorus infernorum (strain V4)).